Here is a 97-residue protein sequence, read N- to C-terminus: UPF0416 protein RC0826 (97 aa).

An N-terminal signal peptide occupies residues 1-33 (MRIFVKAAISTAAWRFYAHPTVAMGICVGTALA).

Belongs to the UPF0416 family.

The sequence is that of UPF0416 protein RC0826 from Rickettsia conorii (strain ATCC VR-613 / Malish 7).